Here is a 143-residue protein sequence, read N- to C-terminus: Cofilin (143 aa).

The region spanning 5–137 (GVAVADESLN…AYESVLEKVS (133 aa)) is the ADF-H domain.

It belongs to the actin-binding proteins ADF family.

It is found in the cytoplasm. The protein localises to the cytoskeleton. It localises to the nucleus matrix. Functionally, controls reversibly actin polymerization and depolymerization in a pH-sensitive manner. It has the ability to bind G- and F-actin in a 1:1 ratio of cofilin to actin. Binding to F-actin is regulated by tropomyosin. It is the major component of intranuclear and cytoplasmic actin rods. Required for accumulation of actin at the cell division site via depolymerizing actin at the cell ends. In association with myosin II has a role in the assembly of the contractile ring via severing actin filaments. Involved in the maintenance of the contractile ring once formed. In association with profilin and capping protein, has a role in the mitotic reorganization of the actin cytoskeleton. This Kluyveromyces lactis (strain ATCC 8585 / CBS 2359 / DSM 70799 / NBRC 1267 / NRRL Y-1140 / WM37) (Yeast) protein is Cofilin (COF1).